Here is a 220-residue protein sequence, read N- to C-terminus: Uracil-DNA glycosylase (220 aa).

The active-site Proton acceptor is D60.

Belongs to the uracil-DNA glycosylase (UDG) superfamily. UNG family.

The protein localises to the cytoplasm. The enzyme catalyses Hydrolyzes single-stranded DNA or mismatched double-stranded DNA and polynucleotides, releasing free uracil.. In terms of biological role, excises uracil residues from the DNA which can arise as a result of misincorporation of dUMP residues by DNA polymerase or due to deamination of cytosine. In Francisella tularensis subsp. novicida (strain U112), this protein is Uracil-DNA glycosylase.